Consider the following 185-residue polypeptide: Recombination protein RecR (185 aa).

A C4-type zinc finger spans residues 44–59 (CSVCFHLSSEPVCEIC). The Toprim domain maps to 67–161 (NTICVVADSR…KVTRIAFGLP (95 aa)).

Belongs to the RecR family.

Its function is as follows. May play a role in DNA repair. It seems to be involved in an RecBC-independent recombinational process of DNA repair. It may act with RecF and RecO. This Trichormus variabilis (strain ATCC 29413 / PCC 7937) (Anabaena variabilis) protein is Recombination protein RecR.